Here is a 455-residue protein sequence, read N- to C-terminus: GTPase Der (455 aa).

EngA-type G domains lie at 4–169 (PIVA…PPKH) and 178–353 (IQMA…EQHR). GTP is bound by residues 10–17 (GRPNVGKS), 57–61 (DTGGL), 120–123 (NKCE), 184–191 (GRPNVGKS), 231–235 (DTAGI), and 296–299 (NKWD). The KH-like domain maps to 354-439 (RRVSTSVVNE…PLKLFWRGKQ (86 aa)).

Belongs to the TRAFAC class TrmE-Era-EngA-EngB-Septin-like GTPase superfamily. EngA (Der) GTPase family. In terms of assembly, associates with the 50S ribosomal subunit.

GTPase that plays an essential role in the late steps of ribosome biogenesis. This Prochlorococcus marinus (strain MIT 9313) protein is GTPase Der.